We begin with the raw amino-acid sequence, 270 residues long: tRNA pseudouridine synthase A (270 aa).

The active-site Nucleophile is the Asp-51. Residue Tyr-109 coordinates substrate.

Belongs to the tRNA pseudouridine synthase TruA family. As to quaternary structure, homodimer.

It carries out the reaction uridine(38/39/40) in tRNA = pseudouridine(38/39/40) in tRNA. Its function is as follows. Formation of pseudouridine at positions 38, 39 and 40 in the anticodon stem and loop of transfer RNAs. This chain is tRNA pseudouridine synthase A, found in Burkholderia ambifaria (strain ATCC BAA-244 / DSM 16087 / CCUG 44356 / LMG 19182 / AMMD) (Burkholderia cepacia (strain AMMD)).